The sequence spans 133 residues: Small ribosomal subunit protein uS8 (133 aa).

It belongs to the universal ribosomal protein uS8 family. As to quaternary structure, part of the 30S ribosomal subunit. Contacts proteins S5 and S12.

In terms of biological role, one of the primary rRNA binding proteins, it binds directly to 16S rRNA central domain where it helps coordinate assembly of the platform of the 30S subunit. This is Small ribosomal subunit protein uS8 from Microcystis aeruginosa (strain NIES-843 / IAM M-2473).